Here is a 158-residue protein sequence, read N- to C-terminus: Transcription factor bHLH146 (158 aa).

The segment covering 77–90 (SSSSNPTTTTSSSS) has biased composition (low complexity). The disordered stretch occupies residues 77–110 (SSSSNPTTTTSSSSDGIRILERPDKEGGNEEGGI). A compositionally biased stretch (basic and acidic residues) spans 94–110 (RILERPDKEGGNEEGGI). The region spanning 94-143 (RILERPDKEGGNEEGGIEERLRELKKLLPGGEEMNVEEMLSEIGNYIKCL) is the bHLH; atypical domain.

Belongs to the bHLH protein family.

Its subcellular location is the nucleus. This Arabidopsis thaliana (Mouse-ear cress) protein is Transcription factor bHLH146 (BHLH146).